The sequence spans 341 residues: uncharacterized protein (341 aa).

Transmembrane regions (helical) follow at residues 6–26 (IIAGLLLLTAGMIDFLWTTLW), 63–83 (LLLCLTLVIWISLFWSGWVLI), and 137–157 (AQGLLTITFSVTYLISVLSAV).

The protein localises to the cell membrane. This is an uncharacterized protein from Bacillus subtilis (strain 168).